The chain runs to 340 residues: GPALPP motifs-containing protein 1 (340 aa).

The interval 1-304 (MARDLIGPAL…PQERIPFDRD (304 aa)) is disordered. A2 carries the N-acetylalanine modification. The GPALPP motif 1 motif lies at 7–12 (GPALPP). S28 bears the Phosphoserine mark. The short motif at 32–37 (GPALPP) is the GPALPP motif 2 element. Positions 60 to 69 (GNQESEEDDS) are enriched in acidic residues. A GPALPP motif 3 motif is present at residues 92-97 (GPALPP). S105 is subject to Phosphoserine. Residues 107–116 (PRPIIGPALP) are compositionally biased toward pro residues. Positions 112–117 (GPALPP) match the GPALPP motif 4 motif. Basic and acidic residues predominate over residues 124–133 (QKSDKGRDDP). The residue at position 138 (T138) is a Phosphothreonine. A phosphoserine mark is found at S140 and S141. 4 stretches are compositionally biased toward basic and acidic residues: residues 163–187 (EFEK…KPIV), 227–261 (PADR…KRLA), 269–279 (ESKRSESLMDI), and 287–304 (KAAE…FDRD). K271 is covalently cross-linked (Glycyl lysine isopeptide (Lys-Gly) (interchain with G-Cter in SUMO2)). K308 participates in a covalent cross-link: Glycyl lysine isopeptide (Lys-Gly) (interchain with G-Cter in SUMO2).

This is GPALPP motifs-containing protein 1 (GPALPP1) from Homo sapiens (Human).